Consider the following 128-residue polypeptide: NADH-quinone oxidoreductase subunit A (128 aa).

3 helical membrane passes run 5 to 25, 72 to 92, and 100 to 120; these read IPIL…VVIA, LTAM…PWAV, and FALV…AYVW.

The protein belongs to the complex I subunit 3 family. In terms of assembly, NDH-1 is composed of 14 different subunits. Subunits NuoA, H, J, K, L, M, N constitute the membrane sector of the complex.

The protein resides in the cell membrane. It catalyses the reaction a quinone + NADH + 5 H(+)(in) = a quinol + NAD(+) + 4 H(+)(out). In terms of biological role, NDH-1 shuttles electrons from NADH, via FMN and iron-sulfur (Fe-S) centers, to quinones in the respiratory chain. The immediate electron acceptor for the enzyme in this species is believed to be a menaquinone. Couples the redox reaction to proton translocation (for every two electrons transferred, four hydrogen ions are translocated across the cytoplasmic membrane), and thus conserves the redox energy in a proton gradient. The sequence is that of NADH-quinone oxidoreductase subunit A from Mycobacterium bovis (strain ATCC BAA-935 / AF2122/97).